The chain runs to 780 residues: ATP-dependent 6-phosphofructokinase, muscle type (780 aa).

T2 carries the N-acetylthreonine modification. The segment at 2–390 is N-terminal catalytic PFK domain 1; it reads THEEHHAART…NWEVYKLLAH (389 aa). Residues G25, 88 to 89, and 118 to 121 contribute to the ATP site; these read RC and GDGS. D119 lines the Mg(2+) pocket. S133 is subject to Phosphoserine. Substrate is bound by residues 164–166, R201, 208–210, E264, R292, and 298–301; these read SID, MGR, and HVQR. The Proton acceptor role is filled by D166. S377 carries the post-translational modification Phosphoserine. The interval 391–401 is interdomain linker; that stretch reads IRPPAPKSGSY. The tract at residues 402-780 is C-terminal regulatory PFK domain 2; sequence TVAVMNVGAP…SRKRSGEATV (379 aa). Beta-D-fructose 2,6-bisphosphate-binding positions include R471 and 528-532; that span reads TVSNN. S530 carries O-linked (GlcNAc) serine glycosylation. K557 is subject to N6-(2-hydroxyisobutyryl)lysine. Beta-D-fructose 2,6-bisphosphate contacts are provided by residues R566, 573 to 575, E629, R655, and 661 to 664; these read MGG and HMQQ. S667 carries the phosphoserine modification. R735 contacts beta-D-fructose 2,6-bisphosphate. The residue at position 775 (S775) is a Phosphoserine; by PKA.

It belongs to the phosphofructokinase type A (PFKA) family. ATP-dependent PFK group I subfamily. Eukaryotic two domain clade 'E' sub-subfamily. Homo- and heterotetramers. Phosphofructokinase (PFK) enzyme functions as a tetramer composed of different combinations of 3 types of subunits, called PFKM (M), PFKL (L) and PFKP (P). The composition of the PFK tetramer differs according to the tissue type it is present in. The kinetic and regulatory properties of the tetrameric enzyme are dependent on the subunit composition, hence can vary across tissues. Interacts (via C-terminus) with HK1 (via N-terminal spermatogenic cell-specific region). It depends on Mg(2+) as a cofactor. GlcNAcylation decreases enzyme activity.

It is found in the cytoplasm. The catalysed reaction is beta-D-fructose 6-phosphate + ATP = beta-D-fructose 1,6-bisphosphate + ADP + H(+). It participates in carbohydrate degradation; glycolysis; D-glyceraldehyde 3-phosphate and glycerone phosphate from D-glucose: step 3/4. Its activity is regulated as follows. Allosterically activated by ADP, AMP, or fructose 2,6-bisphosphate, and allosterically inhibited by ATP or citrate. In terms of biological role, catalyzes the phosphorylation of D-fructose 6-phosphate to fructose 1,6-bisphosphate by ATP, the first committing step of glycolysis. The polypeptide is ATP-dependent 6-phosphofructokinase, muscle type (PFKM) (Oryctolagus cuniculus (Rabbit)).